The primary structure comprises 312 residues: Pseudouridine-5'-phosphate glycosidase (312 aa).

The Proton donor role is filled by Glu31. Lys93 and Val113 together coordinate substrate. Asp145 contributes to the Mn(2+) binding site. Substrate is bound at residue 147-149; sequence SAD. The active-site Nucleophile is Lys166.

The protein belongs to the pseudouridine-5'-phosphate glycosidase family. As to quaternary structure, homotrimer. It depends on Mn(2+) as a cofactor. Requires Fe(2+) as cofactor. Co(2+) is required as a cofactor.

The enzyme catalyses D-ribose 5-phosphate + uracil = psi-UMP + H2O. Inhibited by Zn(2+) and Ni(2+). Catalyzes the reversible cleavage of pseudouridine 5'-phosphate (PsiMP) to ribose 5-phosphate and uracil. Functions biologically in the cleavage direction, as part of a pseudouridine degradation pathway. This chain is Pseudouridine-5'-phosphate glycosidase, found in Escherichia coli (strain K12).